The primary structure comprises 771 residues: Chaperone protein dnaK3 (771 aa).

T198 carries the phosphothreonine; by autocatalysis modification. The segment at 624–771 (FDDDDDYYNR…GWDDDDDDWF (148 aa)) is disordered. Composition is skewed to basic and acidic residues over residues 630–652 (YYNR…RYDD) and 708–734 (YDDR…RENA).

It belongs to the heat shock protein 70 family.

Its function is as follows. Acts as a chaperone. The sequence is that of Chaperone protein dnaK3 (dnaK3) from Synechocystis sp. (strain ATCC 27184 / PCC 6803 / Kazusa).